Consider the following 1335-residue polypeptide: Phospholipid-transporting ATPase IK (1335 aa).

Topologically, residues 1–74 are cytoplasmic; sequence MDGVHLGENL…LYEQFHRMSN (74 aa). A helical membrane pass occupies residues 75 to 95; it reads LYFLFIIILQGIPEISTLPWF. The Exoplasmic loop segment spans residues 96–295; sequence TLFAPLVCLF…LDLMMNKLVA (200 aa). Residues 296–316 form a helical membrane-spanning segment; that stretch reads LIFLSLVIASLLLTVGFTFMV. The Cytoplasmic segment spans residues 317–339; that stretch reads KQFKAKHYYMSPTHGRSDAMESF. A helical membrane pass occupies residues 340-360; that stretch reads FIFWGFLILLSVMVPMAMFII. Residues 361–917 are Exoplasmic loop-facing; that stretch reads AEFIYLGNSI…YMRVCKFLRY (557 aa). The active-site 4-aspartylphosphate intermediate is D407. Positions 407, 408, 409, 504, 545, 568, 601, 681, 682, 683, 831, and 837 each coordinate ATP. D407 is a binding site for Mg(2+). T409 serves as a coordination point for Mg(2+). D857 serves as a coordination point for Mg(2+). N860 and D861 together coordinate ATP. A Mg(2+)-binding site is contributed by D861. A helical transmembrane segment spans residues 918-938; it reads FFYKTVASMMAQIWFSLVNGF. Over 939–946 the chain is Cytoplasmic; it reads SAQPLYEG. The helical transmembrane segment at 947–967 threads the bilayer; it reads WFLALFNLLYSTLPVLYIGLF. Residues 968-995 are Exoplasmic loop-facing; it reads EQDVTAEKSLKMPELYMAGQKGELFNYS. The helical transmembrane segment at 996–1016 threads the bilayer; the sequence is IFMQAITHGTITSMINFFVTV. Residues 1017 to 1033 lie on the Cytoplasmic side of the membrane; the sequence is MVSSDMSKAGSSHDYQS. The helical transmembrane segment at 1034-1054 threads the bilayer; it reads LGVLVAISSLLSVTLEVMLVV. A topological domain (exoplasmic loop) is located at residue K1055. Residues 1056-1076 form a helical membrane-spanning segment; the sequence is YWTLLFVGAVVLSLSSYVLMT. Topologically, residues 1077–1104 are cytoplasmic; that stretch reads SLTQSLWMYRISPKTFPFLFADYNVLFE. Residues 1105-1125 form a helical membrane-spanning segment; the sequence is PCSLLLIVLNVALNVLPMLAL. Residues 1126 to 1335 are Exoplasmic loop-facing; the sequence is RTIHRTVLKQ…SQLEVPRKQS (210 aa). Disordered stretches follow at residues 1192-1215, 1236-1280, and 1314-1335; these read VDDSDGGTVCESLNPPEEDIPLQN, FGKG…GKLL, and SPLWRDSASSSPSQLEVPRKQS. Polar residues-rich tracts occupy residues 1246–1255 and 1266–1276; these read PNTSSQTMEK and QKLPTTTSATS.

The protein belongs to the cation transport ATPase (P-type) (TC 3.A.3) family. Type IV subfamily. The cofactor is Mg(2+). Expressed in testis, specifically in spermatids within seminiferous tubules (at protein level).

It localises to the cytoplasmic vesicle. It is found in the secretory vesicle. The protein localises to the acrosome membrane. The protein resides in the endoplasmic reticulum membrane. It catalyses the reaction ATP + H2O + phospholipidSide 1 = ADP + phosphate + phospholipidSide 2.. It carries out the reaction a 1,2-diacyl-sn-glycero-3-phospho-L-serine(out) + ATP + H2O = a 1,2-diacyl-sn-glycero-3-phospho-L-serine(in) + ADP + phosphate + H(+). In terms of biological role, P4-ATPase flippase which catalyzes the hydrolysis of ATP coupled to the transport of aminophospholipids from the outer to the inner leaflet of various membranes and ensures the maintenance of asymmetric distribution of phospholipids. Phospholipid translocation also seems to be implicated in vesicle formation and in uptake of lipid signaling molecules. May be responsible for the maintenance of asymmetric distribution of phosphatidylserine (PS) in spermatozoa membranes. Involved in acrosome reactions and binding of spermatozoa to zona pellucida. This Mus musculus (Mouse) protein is Phospholipid-transporting ATPase IK.